Consider the following 492-residue polypeptide: Spindle assembly abnormal protein 6 (492 aa).

In terms of domain architecture, PISA spans Ser46–Leu98. Positions Lys192 to Phe407 form a coiled coil.

In terms of assembly, nine homodimers form a cartwheel structure with an internal diameter of 23 nM and radial spokes connecting to the microtubule triplets. Interacts with sas-5.

It localises to the cytoplasm. It is found in the cytoskeleton. The protein resides in the microtubule organizing center. The protein localises to the centrosome. Its subcellular location is the centriole. In terms of biological role, central scaffolding component of the centrioles ensuring their 9-fold symmetry. Required for centrosome biogenesis and duplication. The polypeptide is Spindle assembly abnormal protein 6 (Caenorhabditis elegans).